A 400-amino-acid polypeptide reads, in one-letter code: Large envelope protein (400 aa).

Met-1 is subject to N-acetylmethionine. The interval 1–20 (MGGWSAKPRKGMGTNLSVPN) is disordered. Gly-2 is lipidated: N-myristoyl glycine; by host. The pre-S1 stretch occupies residues 2–119 (GGWSAKPRKG…PPLRDSHPQA (118 aa)). Positions 2 to 174 (GGWSAKPRKG…SSRTGDPALN (173 aa)) are pre-S. The Virion surface; in external conformation segment spans residues 2 to 181 (GGWSAKPRKG…ALNMENITSG (180 aa)). Over 2-253 (GGWSAKPRKG…PGYRWMCLRR (252 aa)) the chain is Intravirion; in internal conformation. Residue Trp-4 is glycosylated (N-linked (GlcNAc...) asparagine). The interval 120–174 (MQWNSTAFQQALQDPRVRGLFFPAGGSSSGTVNPAPNIASHISSISSRTGDPALN) is pre-S2. A helical membrane pass occupies residues 182-202 (FLGPLLVLQAGFFLLTRILTI). The Intravirion; in external conformation segment spans residues 203-253 (PQSLDSWWTSLNFLGGSPVCLGQNSQSPTSNHSPTSCPPICPGYRWMCLRR). A helical transmembrane segment spans residues 254–274 (FIIFLFILLLCLIFLLVLLDY). Residues 275-348 (QGMLPVCPLI…WASVRFSWLS (74 aa)) lie on the Virion surface side of the membrane. Asn-320 is a glycosylation site (N-linked (GlcNAc...) asparagine; by host). A helical membrane pass occupies residues 349–369 (LLVPFVQWFVGLSPTVWLSVI). At 370–375 (WMMWYW) the chain is on the intravirion side. A helical transmembrane segment spans residues 376–398 (GPSLYNILSPFIPLLPIFFCLWV). At 399-400 (YI) the chain is on the virion surface side.

It belongs to the orthohepadnavirus major surface antigen family. In its internal form (Li-HBsAg), interacts with the capsid protein and with the isoform S. Interacts with host chaperone CANX. As to quaternary structure, associates with host chaperone CANX through its pre-S2 N glycan; this association may be essential for isoform M proper secretion. In terms of assembly, interacts with isoform L. Interacts with the antigens of satellite virus HDV (HDVAgs); this interaction is required for encapsidation of HDV genomic RNA. Isoform M is N-terminally acetylated by host at a ratio of 90%, and N-glycosylated by host at the pre-S2 region. In terms of processing, myristoylated.

The protein localises to the virion membrane. Its function is as follows. The large envelope protein exists in two topological conformations, one which is termed 'external' or Le-HBsAg and the other 'internal' or Li-HBsAg. In its external conformation the protein attaches the virus to cell receptors and thereby initiating infection. This interaction determines the species specificity and liver tropism. This attachment induces virion internalization predominantly through caveolin-mediated endocytosis. The large envelope protein also assures fusion between virion membrane and endosomal membrane. In its internal conformation the protein plays a role in virion morphogenesis and mediates the contact with the nucleocapsid like a matrix protein. In terms of biological role, the middle envelope protein plays an important role in the budding of the virion. It is involved in the induction of budding in a nucleocapsid independent way. In this process the majority of envelope proteins bud to form subviral lipoprotein particles of 22 nm of diameter that do not contain a nucleocapsid. The polypeptide is Large envelope protein (Hepatitis B virus genotype A1 subtype adw2 (isolate Southern-Africa/Cai) (HBV-A)).